Here is a 147-residue protein sequence, read N- to C-terminus: Proteinase inhibitor type-2 (147 aa).

The first 25 residues, 1 to 25, serve as a signal peptide directing secretion; that stretch reads MAVHKEVSFVAYLLIVLGMFLYVDA. 2 consecutive repeat copies span residues 25 to 81 and 82 to 141. 8 cysteine pairs are disulfide-bonded: Cys28-Cys116, Cys32-Cys112, Cys40-Cys122, Cys52-Cys89, Cys55-Cys73, Cys56-Cys85, Cys62-Cys98, and Cys115-Cys133.

Belongs to the protease inhibitor I20 (potato type II proteinase inhibitor) family.

The protein is Proteinase inhibitor type-2 of Solanum tuberosum (Potato).